The primary structure comprises 120 residues: UPF0091 protein PH1455 (120 aa).

The protein belongs to the UPF0091 family.

This Pyrococcus horikoshii (strain ATCC 700860 / DSM 12428 / JCM 9974 / NBRC 100139 / OT-3) protein is UPF0091 protein PH1455.